Here is a 422-residue protein sequence, read N- to C-terminus: CinA-like protein (422 aa).

It belongs to the CinA family.

This Mycolicibacterium gilvum (strain PYR-GCK) (Mycobacterium gilvum (strain PYR-GCK)) protein is CinA-like protein.